The sequence spans 476 residues: Siroheme synthase (476 aa).

The precorrin-2 dehydrogenase /sirohydrochlorin ferrochelatase stretch occupies residues 1-203 (MHYFPVFADL…RQTEAAKKEL (203 aa)). Residues 22–23 (GV) and 43–44 (QK) each bind NAD(+). The residue at position 128 (serine 128) is a Phosphoserine. The tract at residues 214-476 (GFVSLVGAGP…LDSLRIESVA (263 aa)) is uroporphyrinogen-III C-methyltransferase. Proline 223 contributes to the S-adenosyl-L-methionine binding site. Residue aspartate 246 is the Proton acceptor of the active site. Residue lysine 268 is the Proton donor of the active site. S-adenosyl-L-methionine contacts are provided by residues 299 to 301 (GGD), valine 304, 329 to 330 (TA), methionine 381, and glycine 410.

This sequence in the N-terminal section; belongs to the precorrin-2 dehydrogenase / sirohydrochlorin ferrochelatase family. It in the C-terminal section; belongs to the precorrin methyltransferase family.

The catalysed reaction is uroporphyrinogen III + 2 S-adenosyl-L-methionine = precorrin-2 + 2 S-adenosyl-L-homocysteine + H(+). The enzyme catalyses precorrin-2 + NAD(+) = sirohydrochlorin + NADH + 2 H(+). It carries out the reaction siroheme + 2 H(+) = sirohydrochlorin + Fe(2+). The protein operates within cofactor biosynthesis; adenosylcobalamin biosynthesis; precorrin-2 from uroporphyrinogen III: step 1/1. It participates in cofactor biosynthesis; adenosylcobalamin biosynthesis; sirohydrochlorin from precorrin-2: step 1/1. Its pathway is porphyrin-containing compound metabolism; siroheme biosynthesis; precorrin-2 from uroporphyrinogen III: step 1/1. It functions in the pathway porphyrin-containing compound metabolism; siroheme biosynthesis; siroheme from sirohydrochlorin: step 1/1. The protein operates within porphyrin-containing compound metabolism; siroheme biosynthesis; sirohydrochlorin from precorrin-2: step 1/1. Its function is as follows. Multifunctional enzyme that catalyzes the SAM-dependent methylations of uroporphyrinogen III at position C-2 and C-7 to form precorrin-2 via precorrin-1. Then it catalyzes the NAD-dependent ring dehydrogenation of precorrin-2 to yield sirohydrochlorin. Finally, it catalyzes the ferrochelation of sirohydrochlorin to yield siroheme. The polypeptide is Siroheme synthase (Actinobacillus succinogenes (strain ATCC 55618 / DSM 22257 / CCUG 43843 / 130Z)).